The primary structure comprises 141 residues: uncharacterized protein (141 aa).

2 helical membrane-spanning segments follow: residues 20–42 and 52–74; these read FLVN…FCLA and LHLC…IFTL.

It is found in the cell membrane. This is an uncharacterized protein from Archaeoglobus fulgidus (strain ATCC 49558 / DSM 4304 / JCM 9628 / NBRC 100126 / VC-16).